A 341-amino-acid chain; its full sequence is MINQVYQLVAPRQFDVTYNNVDIYGNHVIVRPLYLSICAADQRYYTGRRDENVLRKKLPMSLVHEAVGEVVFDSKGVFEKGTKVVMVPNTPTEQHHIIAENYLASSYFRSSGYDGFMQDYVVMAHDRIVPLPNDIDLSTISYTELVSVSYHAIQRFERKSIPLKTSFGIWGDGNLGYITAILLRKLYPEAKTYVFGKTDYKLSHFSFVDDIFTVNQIPDDLKIDHAFECVGGKGSQVALQQIVEHISPEGSIALLGVSELPVEVNTRLVLEKGLTLIGSSRSGSKDFEQVVDLYRKYPDIVEKLALLKGHEINVCTMQDIVQAFEMDLSTSWGKTVLKWTI.

Positions 38, 64, 65, and 144 each coordinate Zn(2+).

Belongs to the zinc-containing alcohol dehydrogenase family. As to quaternary structure, heterodimer together with TarI. The cofactor is Zn(2+).

It catalyses the reaction D-ribitol 5-phosphate + NADP(+) = D-ribulose 5-phosphate + NADPH + H(+). It functions in the pathway cell wall biogenesis; poly(ribitol phosphate) teichoic acid biosynthesis. Catalyzes the NADPH dependent reduction of D-ribulose 5-phosphate to D-ribitol 5-phosphate. The chain is Ribulose-5-phosphate reductase 2 from Staphylococcus aureus (strain NCTC 8325 / PS 47).